We begin with the raw amino-acid sequence, 49 residues long: Large ribosomal subunit protein bL33A (49 aa).

The protein belongs to the bacterial ribosomal protein bL33 family.

This Streptococcus pneumoniae (strain Hungary19A-6) protein is Large ribosomal subunit protein bL33A.